Consider the following 217-residue polypeptide: Lipid A acyltransferase PagP (217 aa).

An N-terminal signal peptide occupies residues 1-24 (MYLKRILITLSLITLPIVPCLSYA). Residues histidine 89, aspartate 132, and serine 133 contribute to the active site.

This sequence belongs to the lipid A palmitoyltransferase family. In terms of assembly, homodimer.

It is found in the cell outer membrane. It catalyses the reaction a lipid A + a 1,2-diacyl-sn-glycero-3-phosphocholine = a hepta-acyl lipid A + a 2-acyl-sn-glycero-3-phosphocholine. The enzyme catalyses a lipid IVA + a 1,2-diacyl-sn-glycero-3-phosphocholine = a lipid IVB + a 2-acyl-sn-glycero-3-phosphocholine. It carries out the reaction a lipid IIA + a 1,2-diacyl-sn-glycero-3-phosphocholine = a lipid IIB + a 2-acyl-sn-glycero-3-phosphocholine. Transfers a fatty acid residue from the sn-1 position of a phospholipid to the N-linked hydroxyfatty acid chain on the proximal unit of lipid A or its precursors. In Pectobacterium atrosepticum (strain SCRI 1043 / ATCC BAA-672) (Erwinia carotovora subsp. atroseptica), this protein is Lipid A acyltransferase PagP.